The chain runs to 327 residues: Cyclic AMP-responsive element-binding protein 1 (327 aa).

2 disordered regions span residues 1-26 and 94-113; these read MTMESGAENQQSGDAAVTEAENQQMT and SEDSQESVDSVTDSQKRREI. The 60-residue stretch at 87 to 146 folds into the KID domain; that stretch reads QISTIAESEDSQESVDSVTDSQKRREILSRRPSYRKILNDLSSDAPGVPRIEEEKSEEET. Ser-119 carries the phosphoserine; by CaMK1, CaMK2, CaMK4, PKB/AKT1 or PKB/AKT2, RPS6KA3, RPS6KA4, RPS6KA5, SGK1 and TSSK4 modification. Lys-122 is covalently cross-linked (Glycyl lysine isopeptide (Lys-Gly) (interchain with G-Cter in SUMO2)). The disordered stretch occupies residues 125-148; it reads NDLSSDAPGVPRIEEEKSEEETSA. At Ser-128 the chain carries Phosphoserine. Position 257 is a phosphoserine; by HIPK2 (Ser-257). The region spanning 269-327 is the bZIP domain; it reads ARKREVRLMKNREAARECRRKKKEYVKCLENRVAVLENQNKTLIEELKALKDLYCHKSD. The basic motif stretch occupies residues 270 to 295; that stretch reads RKREVRLMKNREAARECRRKKKEYVK. Residues Lys-271 and Lys-290 each participate in a glycyl lysine isopeptide (Lys-Gly) (interchain with G-Cter in SUMO1) cross-link. The tract at residues 297-318 is leucine-zipper; sequence LENRVAVLENQNKTLIEELKAL.

It belongs to the bZIP family. In terms of assembly, interacts with PPRC1. Binds DNA as a dimer. This dimer is stabilized by magnesium ions. Interacts, through the bZIP domain, with the coactivators CRTC1/TORC1, CRTC2/TORC2 and CRTC3/TORC3. When phosphorylated on Ser-119, binds CREBBP. Interacts with CREBL2; regulates CREB1 phosphorylation, stability and transcriptional activity. Interacts (phosphorylated form) with TOX3. Interacts with ARRB1. Binds to HIPK2. Interacts with SGK1. Interacts with TSSK4; this interaction facilitates phosphorylation on Ser-119. Forms a complex with KMT2A and CREBBP. Interacts with TOX4; CREB1 is required for full induction of TOX4-dependent activity and the interaction is increased by cAMP and inhibited by insulin. As to quaternary structure, (Microbial infection) Interacts with hepatitis B virus/HBV protein X. (Microbial infection) Interacts with HTLV-1 protein Tax. Post-translationally, stimulated by phosphorylation. Phosphorylation of both Ser-119 and Ser-128 in the SCN regulates the activity of CREB and participates in circadian rhythm generation. Phosphorylation of Ser-119 allows CREBBP binding. In liver, phosphorylation is induced by fasting or glucagon in a circadian fashion. CREBL2 positively regulates phosphorylation at Ser-119 thereby stimulating CREB1 transcriptional activity. Phosphorylated upon calcium influx by CaMK4 and CaMK2 on Ser-119. CaMK4 is much more potent than CaMK2 in activating CREB. Phosphorylated by CaMK2 on Ser-128. Phosphorylation of Ser-128 blocks CREB-mediated transcription even when Ser-119 is phosphorylated. Phosphorylated by CaMK1. Phosphorylation of Ser-257 by HIPK2 in response to genotoxic stress promotes CREB1 activity, facilitating the recruitment of the coactivator CBP. Phosphorylated at Ser-119 by RPS6KA3, RPS6KA4 and RPS6KA5 in response to mitogenic or stress stimuli. Phosphorylated by TSSK4 on Ser-119. In terms of processing, sumoylated with SUMO1. Sumoylation on Lys-290, but not on Lys-271, is required for nuclear localization of this protein. Sumoylation is enhanced under hypoxia, promoting nuclear localization and stabilization.

The protein localises to the nucleus. Phosphorylation-dependent transcription factor that stimulates transcription upon binding to the DNA cAMP response element (CRE), a sequence present in many viral and cellular promoters. Transcription activation is enhanced by the TORC coactivators which act independently of Ser-119 phosphorylation. Involved in different cellular processes including the synchronization of circadian rhythmicity and the differentiation of adipose cells. Regulates the expression of apoptotic and inflammatory response factors in cardiomyocytes in response to ERFE-mediated activation of AKT signaling. The protein is Cyclic AMP-responsive element-binding protein 1 (CREB1) of Homo sapiens (Human).